A 291-amino-acid chain; its full sequence is Light-independent protochlorophyllide reductase iron-sulfur ATP-binding protein (291 aa).

ATP contacts are provided by residues 10–15 and lysine 39; that span reads GIGKST. A Mg(2+)-binding site is contributed by serine 14. The [4Fe-4S] cluster site is built by cysteine 95 and cysteine 129. 180–181 contributes to the ATP binding site; it reads NR.

Belongs to the NifH/BchL/ChlL family. In terms of assembly, homodimer. Protochlorophyllide reductase is composed of three subunits; ChlL, ChlN and ChlB. Requires [4Fe-4S] cluster as cofactor.

It is found in the plastid. It localises to the chloroplast. It catalyses the reaction chlorophyllide a + oxidized 2[4Fe-4S]-[ferredoxin] + 2 ADP + 2 phosphate = protochlorophyllide a + reduced 2[4Fe-4S]-[ferredoxin] + 2 ATP + 2 H2O. It functions in the pathway porphyrin-containing compound metabolism; chlorophyll biosynthesis (light-independent). Component of the dark-operative protochlorophyllide reductase (DPOR) that uses Mg-ATP and reduced ferredoxin to reduce ring D of protochlorophyllide (Pchlide) to form chlorophyllide a (Chlide). This reaction is light-independent. The L component serves as a unique electron donor to the NB-component of the complex, and binds Mg-ATP. The polypeptide is Light-independent protochlorophyllide reductase iron-sulfur ATP-binding protein (Pinus thunbergii (Japanese black pine)).